Reading from the N-terminus, the 283-residue chain is Bifunctional protein FolD (283 aa).

Residues 165-167 (GAS), S190, and I231 each bind NADP(+).

This sequence belongs to the tetrahydrofolate dehydrogenase/cyclohydrolase family. Homodimer.

It carries out the reaction (6R)-5,10-methylene-5,6,7,8-tetrahydrofolate + NADP(+) = (6R)-5,10-methenyltetrahydrofolate + NADPH. The catalysed reaction is (6R)-5,10-methenyltetrahydrofolate + H2O = (6R)-10-formyltetrahydrofolate + H(+). The protein operates within one-carbon metabolism; tetrahydrofolate interconversion. Its function is as follows. Catalyzes the oxidation of 5,10-methylenetetrahydrofolate to 5,10-methenyltetrahydrofolate and then the hydrolysis of 5,10-methenyltetrahydrofolate to 10-formyltetrahydrofolate. This is Bifunctional protein FolD from Bordetella bronchiseptica (strain ATCC BAA-588 / NCTC 13252 / RB50) (Alcaligenes bronchisepticus).